We begin with the raw amino-acid sequence, 592 residues long: Polyadenylate-binding protein, cytoplasmic and nuclear (592 aa).

Basic and acidic residues predominate over residues 1 to 10 (MSDITEKTAE). The interval 1–43 (MSDITEKTAEQLENLQINDDQQPAQSASAPSTSASESEASSVS) is disordered. The span at 11-20 (QLENLQINDD) shows a compositional bias: polar residues. Low complexity predominate over residues 21–43 (QQPAQSASAPSTSASESEASSVS). 4 consecutive RRM domains span residues 50–128 (ASLY…WSER), 138–215 (GNIF…MHVP), 231–308 (TNIY…RAQK), and 334–411 (VNLF…IAQR). The 80-residue stretch at 507–586 (NQFPRHQQQH…ALAAYENFKK (80 aa)) folds into the PABC domain.

Belongs to the polyadenylate-binding protein type-1 family.

Its subcellular location is the cytoplasm. It localises to the nucleus. Functionally, binds the poly(A) tail of mRNA. Appears to be an important mediator of the multiple roles of the poly(A) tail in mRNA biogenesis, stability and translation. In the nucleus, involved in both mRNA cleavage and polyadenylation. Is also required for efficient mRNA export to the cytoplasm. Acts in concert with a poly(A)-specific nuclease (PAN) to affect poly(A) tail shortening, which may occur concomitantly with either nucleocytoplasmic mRNA transport or translational initiation. In the cytoplasm, stimulates translation initiation and regulates mRNA decay through translation termination-coupled poly(A) shortening, probably mediated by PAN. The polypeptide is Polyadenylate-binding protein, cytoplasmic and nuclear (PAB1) (Kluyveromyces lactis (strain ATCC 8585 / CBS 2359 / DSM 70799 / NBRC 1267 / NRRL Y-1140 / WM37) (Yeast)).